The chain runs to 23 residues: Conolysin-Mt1 (23 aa).

Serine amide is present on Ser-22.

In terms of tissue distribution, expressed by the venom duct.

The protein resides in the secreted. Functionally, this cytolytic peptide has ability to disrupt the integrity of cell membranes from both prokaryotes and eukaryotes. It permeabilizes both negatively charged prokaryotic (PE:PG) and zwitterionic eukaryotic (PC:cholesterol) model membranes. It has potent hemolytic activity on human erythrocytes and exhibits low antimicrobial activity against the Gram-negative bacterium E.coli (MIC&gt;50 uM) and the Gram-positive bacterium S.aureus (MIC=25-50 uM). Intracranial injection causes mice to shuffle backward until the encounter an obstacle, at which time the mouse jump into the air. The backward shuffle is reminiscent to the signature dance 'moonwalk' that gained widespread popularity after being performed by Michael Jackson. This Conus mustelinus (Weasel cone) protein is Conolysin-Mt1.